Reading from the N-terminus, the 288-residue chain is Acetyl-coenzyme A carboxylase carboxyl transferase subunit beta (288 aa).

Residues 34-288 (LFAKCPACKH…HLVAFHGGGQ (255 aa)) enclose the CoA carboxyltransferase N-terminal domain. Positions 38, 41, 56, and 59 each coordinate Zn(2+). A C4-type zinc finger spans residues 38–59 (CPACKHMIYKKDLGLAKICPTC).

Belongs to the AccD/PCCB family. Acetyl-CoA carboxylase is a heterohexamer composed of biotin carboxyl carrier protein (AccB), biotin carboxylase (AccC) and two subunits each of ACCase subunit alpha (AccA) and ACCase subunit beta (AccD). Zn(2+) serves as cofactor.

Its subcellular location is the cytoplasm. The enzyme catalyses N(6)-carboxybiotinyl-L-lysyl-[protein] + acetyl-CoA = N(6)-biotinyl-L-lysyl-[protein] + malonyl-CoA. It functions in the pathway lipid metabolism; malonyl-CoA biosynthesis; malonyl-CoA from acetyl-CoA: step 1/1. Its function is as follows. Component of the acetyl coenzyme A carboxylase (ACC) complex. Biotin carboxylase (BC) catalyzes the carboxylation of biotin on its carrier protein (BCCP) and then the CO(2) group is transferred by the transcarboxylase to acetyl-CoA to form malonyl-CoA. The sequence is that of Acetyl-coenzyme A carboxylase carboxyl transferase subunit beta from Streptococcus pyogenes serotype M4 (strain MGAS10750).